We begin with the raw amino-acid sequence, 140 residues long: Endoribonuclease YbeY (140 aa).

Zn(2+) contacts are provided by histidine 100, histidine 104, and histidine 110.

It belongs to the endoribonuclease YbeY family. Zn(2+) serves as cofactor.

The protein resides in the cytoplasm. Its function is as follows. Single strand-specific metallo-endoribonuclease involved in late-stage 70S ribosome quality control and in maturation of the 3' terminus of the 16S rRNA. This is Endoribonuclease YbeY from Helicobacter pylori (strain P12).